The primary structure comprises 955 residues: UPF0182 protein tll1193 (955 aa).

9 consecutive transmembrane segments (helical) span residues 6 to 26 (VVPL…AIAL), 53 to 73 (WSVQ…FYGC), 98 to 118 (GLGL…LIVA), 163 to 183 (WLLG…VGLF), 186 to 206 (LGIL…PVVL), 240 to 260 (LWLV…YLLA), 280 to 300 (LQGL…LERY), 324 to 344 (LYGW…WSAI), and 354 to 374 (GPIA…ILIV).

The protein belongs to the UPF0182 family.

It is found in the cell membrane. This Thermosynechococcus vestitus (strain NIES-2133 / IAM M-273 / BP-1) protein is UPF0182 protein tll1193.